A 405-amino-acid chain; its full sequence is MDSLVTANTKFCFDLFQEIGKDDRHKNIFFSPLSLSAALGMVRLGARSDSAHQIDEVLHFNEFSQNESKEPDPCLKSNKQKAGSLNNESGLVSCYFGQLLSKLDRIKTDYTLSIANRLYGEQEFPICQEYLDGVIQFYHTTIESVDFQKNPEKSRQEINFWVECQSQGKIKELFSKDAINAETVLVLVNAVYFKAKWETYFDHENTVDAPFCLNANENKSVKMMTQKGLYRIGFIEEVKAQILEMRYTKGKLSMFVLLPSHSKDNLKGLEELERKITYEKMVAWSSSENMSEESVVLSFPRFTLEDSYDLNSILQDMGITDIFDETRADLTGISPSPNLYLSKIIHKTFVEVDENGTQAAAATGAVVSERSLRSWVEFNANHPFLFFIRHNKTQTILFYGRVCSP.

Residues 64-83 form a disordered region; that stretch reads SQNESKEPDPCLKSNKQKAG.

The protein belongs to the serpin family. Ov-serpin subfamily. In terms of assembly, interacts with SLFN12; as part of a pathway regulating cell differentiation. May interact with USP14. Expressed in many tissues, including brain, bone marrow, lymph node, heart, lung, liver, pancreas, testis, ovary, and intestine.

The protein resides in the cytoplasm. Its function is as follows. Inhibits trypsin and plasmin, but not thrombin, coagulation factor Xa, or urokinase-type plasminogen activator. May play a role in cell differentiation. The protein is Serpin B12 (SERPINB12) of Homo sapiens (Human).